The chain runs to 364 residues: Chorismate synthase (364 aa).

Positions 48 and 54 each coordinate NADP(+). FMN is bound by residues 129-131 (RSS), 243-244 (NA), Gly-288, 303-307 (KPTSS), and Arg-329.

The protein belongs to the chorismate synthase family. Homotetramer. It depends on FMNH2 as a cofactor.

The enzyme catalyses 5-O-(1-carboxyvinyl)-3-phosphoshikimate = chorismate + phosphate. The protein operates within metabolic intermediate biosynthesis; chorismate biosynthesis; chorismate from D-erythrose 4-phosphate and phosphoenolpyruvate: step 7/7. In terms of biological role, catalyzes the anti-1,4-elimination of the C-3 phosphate and the C-6 proR hydrogen from 5-enolpyruvylshikimate-3-phosphate (EPSP) to yield chorismate, which is the branch point compound that serves as the starting substrate for the three terminal pathways of aromatic amino acid biosynthesis. This reaction introduces a second double bond into the aromatic ring system. In Chelativorans sp. (strain BNC1), this protein is Chorismate synthase.